The chain runs to 102 residues: Co-chaperonin GroES (102 aa).

The protein belongs to the GroES chaperonin family. Heptamer of 7 subunits arranged in a ring. Interacts with the chaperonin GroEL.

The protein resides in the cytoplasm. Together with the chaperonin GroEL, plays an essential role in assisting protein folding. The GroEL-GroES system forms a nano-cage that allows encapsulation of the non-native substrate proteins and provides a physical environment optimized to promote and accelerate protein folding. GroES binds to the apical surface of the GroEL ring, thereby capping the opening of the GroEL channel. The sequence is that of Co-chaperonin GroES from Streptomyces albus G.